A 159-amino-acid polypeptide reads, in one-letter code: ATP synthase subunit b 2 (159 aa).

A helical transmembrane segment spans residues 1–21; that stretch reads MDATFWAFIALVIFVVIVVYM.

The protein belongs to the ATPase B chain family. As to quaternary structure, F-type ATPases have 2 components, F(1) - the catalytic core - and F(0) - the membrane proton channel. F(1) has five subunits: alpha(3), beta(3), gamma(1), delta(1), epsilon(1). F(0) has three main subunits: a(1), b(2) and c(10-14). The alpha and beta chains form an alternating ring which encloses part of the gamma chain. F(1) is attached to F(0) by a central stalk formed by the gamma and epsilon chains, while a peripheral stalk is formed by the delta and b chains.

Its subcellular location is the cell inner membrane. Functionally, f(1)F(0) ATP synthase produces ATP from ADP in the presence of a proton or sodium gradient. F-type ATPases consist of two structural domains, F(1) containing the extramembraneous catalytic core and F(0) containing the membrane proton channel, linked together by a central stalk and a peripheral stalk. During catalysis, ATP synthesis in the catalytic domain of F(1) is coupled via a rotary mechanism of the central stalk subunits to proton translocation. Component of the F(0) channel, it forms part of the peripheral stalk, linking F(1) to F(0). This Brucella canis (strain ATCC 23365 / NCTC 10854 / RM-666) protein is ATP synthase subunit b 2.